A 190-amino-acid polypeptide reads, in one-letter code: Small ribosomal subunit protein mS23 (190 aa).

A2 carries the N-acetylalanine modification. K83 carries the post-translational modification N6-succinyllysine. K102 is modified (N6-acetyllysine). Residues 137–190 are disordered; sequence KARTQQEGSQVSRKSESMGVESQTALEENPPLKEVPQAQHLESPGEESKGLSPP.

It belongs to the mitochondrion-specific ribosomal protein mS23 family. As to quaternary structure, component of the mitochondrial ribosome small subunit (28S) which comprises a 12S rRNA and about 30 distinct proteins.

It localises to the mitochondrion. The protein is Small ribosomal subunit protein mS23 of Bos taurus (Bovine).